The following is a 463-amino-acid chain: Glutamate--tRNA ligase 1 (463 aa).

The 'HIGH' region motif lies at 10-20; that stretch reads PSPTGYLHIGG. The short motif at 238–242 is the 'KMSKS' region element; sequence KLSKR. Lysine 241 lines the ATP pocket.

It belongs to the class-I aminoacyl-tRNA synthetase family. Glutamate--tRNA ligase type 1 subfamily. Monomer.

The protein localises to the cytoplasm. The enzyme catalyses tRNA(Glu) + L-glutamate + ATP = L-glutamyl-tRNA(Glu) + AMP + diphosphate. Functionally, catalyzes the attachment of glutamate to tRNA(Glu) in a two-step reaction: glutamate is first activated by ATP to form Glu-AMP and then transferred to the acceptor end of tRNA(Glu). This is Glutamate--tRNA ligase 1 from Helicobacter pylori (strain G27).